We begin with the raw amino-acid sequence, 69 residues long: Magnetosome protein MamI (69 aa).

At 1-2 (MP) the chain is on the cytoplasmic side. Residues 3-23 (SVIFGLLALAIGLLGLTAWWW) form a helical membrane-spanning segment. Residues 24–31 (SVTEFLRG) are Lumenal-facing. Residues 32–52 (AVPVALIIFGLVALAAGVQSV) traverse the membrane as a helical segment. The Cytoplasmic segment spans residues 53–69 (RVPPAGKRANSDPNIDG).

The protein belongs to the magnetosome MamI protein family.

It is found in the magnetosome membrane. May be involved in an early stage of magnetosome nucleation. Not essential for formation of magnetosome membrane vesicles, it is probably functionally redundant with other proteins. May bind magnetite. One of 7 genes (mamLQBIEMO) able to induce magnetosome membrane biogenesis; coexpression of mamLQRBIEMO in a deletion of the 17 gene mamAB operon restores magnetosome vesicle formation but not magnetite biosynthesis. The sequence is that of Magnetosome protein MamI from Magnetospirillum gryphiswaldense (strain DSM 6361 / JCM 21280 / NBRC 15271 / MSR-1).